Reading from the N-terminus, the 1200-residue chain is Hyalin (1200 aa).

HYR domains lie at 1–39 (SSHNPGQSFTTGTTTTVVYTATDAFANVGQCAFTITVTA), 40–123 (TDTT…NVIE), 124–207 (VDTT…NVIE), 208–292 (VDTT…NVIE), 293–376 (VDTT…NVVE), 377–460 (VDTT…NVVE), 461–544 (VDTT…TVEE), 546–629 (VDTT…TVIA), 630–713 (VDTT…TISA), 714–797 (VDTT…VINA), 798–881 (VDTT…TIGT), 882–966 (VDTM…TVFA), 967–1050 (VDTT…TVTA), 1051–1133 (QDTT…TVNT), and 1134–1200 (QDTT…FFSD).

Homooligomer in presence of calcium. Glycosylated.

The protein localises to the secreted. It is found in the extracellular space. It localises to the extracellular matrix. Functionally, major constituent of the hyaline layer. The hyaline layer of echinoderm embryos is an extraembryonic matrix that functions as a substrate for cell adhesion through early development. This Strongylocentrotus purpuratus (Purple sea urchin) protein is Hyalin.